The sequence spans 590 residues: ATP-dependent lipid A-core flippase (590 aa).

6 consecutive transmembrane segments (helical) span residues 31 to 51 (IFIA…VIPK), 74 to 94 (AILT…GYLL), 132 to 152 (AVIF…ITLV), 159 to 179 (VALL…VSVI), 259 to 279 (VTAF…MIQA), and 286 to 306 (IGGF…LKHL). The ABC transmembrane type-1 domain occupies 33 to 315 (IAAILAMAVV…LTDINQPLTR (283 aa)). One can recognise an ABC transporter domain in the interval 347–585 (LVFERVGFRY…NGLYAGLHRI (239 aa)). 381–388 (GPSGSGKT) lines the ATP pocket.

It belongs to the ABC transporter superfamily. Lipid exporter (TC 3.A.1.106) family. As to quaternary structure, homodimer.

The protein localises to the cell inner membrane. The catalysed reaction is ATP + H2O + lipid A-core oligosaccharideSide 1 = ADP + phosphate + lipid A-core oligosaccharideSide 2.. Functionally, involved in lipopolysaccharide (LPS) biosynthesis. Translocates lipid A-core from the inner to the outer leaflet of the inner membrane. Transmembrane domains (TMD) form a pore in the inner membrane and the ATP-binding domain (NBD) is responsible for energy generation. This Cupriavidus pinatubonensis (strain JMP 134 / LMG 1197) (Cupriavidus necator (strain JMP 134)) protein is ATP-dependent lipid A-core flippase.